Reading from the N-terminus, the 182-residue chain is Large ribosomal subunit protein uL6 (182 aa).

This sequence belongs to the universal ribosomal protein uL6 family. As to quaternary structure, part of the 50S ribosomal subunit.

In terms of biological role, this protein binds to the 23S rRNA, and is important in its secondary structure. It is located near the subunit interface in the base of the L7/L12 stalk, and near the tRNA binding site of the peptidyltransferase center. The sequence is that of Large ribosomal subunit protein uL6 from Trichormus variabilis (strain ATCC 29413 / PCC 7937) (Anabaena variabilis).